The sequence spans 1324 residues: Myotubularin-related protein DDB_G0290005 (1324 aa).

Positions 140–276 are disordered; that stretch reads KYHDNTTPNN…TSSTNGNCST (137 aa). The segment covering 144–180 has biased composition (low complexity); the sequence is NTTPNNNNNNNNNNNNNNNNTNNNNNNNINKSNNSST. Positions 181–194 are enriched in polar residues; sequence DQLNSFSLEKQPSQ. Over residues 195 to 222 the composition is skewed to low complexity; the sequence is NENLNNNNNNNNNNNNGNNNINNNNLMN. A compositionally biased stretch (polar residues) spans 223–247; it reads SLTQPSTSSRSRLLKSNSTPINLNE. The segment covering 248–276 has biased composition (low complexity); the sequence is SSTSTNSPTLSSTTTTTTTTSSTNGNCST. Positions 349 to 807 constitute a Myotubularin phosphatase domain; that stretch reads GWLFYDPIEE…KGVQLWSDYF (459 aa). Residues 514 to 515, 575 to 581, and arginine 621 contribute to the substrate site; these read NI and CIDGWDR. Cysteine 575 functions as the Phosphocysteine intermediate in the catalytic mechanism. Disordered regions lie at residues 624-664, 841-1043, 1066-1110, 1144-1213, and 1232-1296; these read QSIS…TTTS, QKKK…QQQE, EQQE…QQQT, RKQE…LTMP, and LHPN…DNTS. Low complexity-rich tracts occupy residues 625 to 664 and 852 to 864; these read SISS…TTTS and GASG…SGSS. The span at 865 to 882 shows a compositional bias: basic residues; that stretch reads SKHHHHHHHHHHHHHHRK. A compositionally biased stretch (basic and acidic residues) spans 883 to 894; it reads STDEKDSKEKSS. 2 stretches are compositionally biased toward low complexity: residues 899 to 914 and 927 to 973; these read SRTS…STSS and TITT…TTTP. Residues 988–1002 are compositionally biased toward basic and acidic residues; the sequence is DKLKSPSGDDIKQEQ. Polar residues predominate over residues 1005-1024; it reads MNQFTSQHPNNQMESSSEIN. Residues 1020–1195 are a coiled coil; sequence SSEINQQNEQ…LEQQKPKADI (176 aa). Low complexity predominate over residues 1025-1043; that stretch reads QQNEQSQLEQQQEQQQQQE. Polar residues predominate over residues 1079 to 1090; the sequence is PNETITYSMESD. The segment covering 1091–1109 has biased composition (low complexity); it reads SQSSISQNQNQLQQQQQQQ. Basic and acidic residues predominate over residues 1144 to 1193; that stretch reads RKQEKEKRKLEKEKKQKERAERKLEKEKKRDQKEREQKEKELLEQQKPKA. Polar residues predominate over residues 1234 to 1243; the sequence is PNLSDQNSQT. 2 stretches are compositionally biased toward low complexity: residues 1244–1258 and 1265–1294; these read NSSG…NSPN and SNLS…NNDN.

This sequence belongs to the protein-tyrosine phosphatase family. Non-receptor class myotubularin subfamily.

The protein resides in the cytoplasm. In terms of biological role, phosphatase that acts on lipids with a phosphoinositol headgroup. This is Myotubularin-related protein DDB_G0290005 from Dictyostelium discoideum (Social amoeba).